An 804-amino-acid polypeptide reads, in one-letter code: Leucine--tRNA ligase (804 aa).

Residues 39–50 (PYPSGAGLHVGH) carry the 'HIGH' region motif. The short motif at 580-584 (KMSKS) is the 'KMSKS' region element. K583 contributes to the ATP binding site.

Belongs to the class-I aminoacyl-tRNA synthetase family.

The protein resides in the cytoplasm. The catalysed reaction is tRNA(Leu) + L-leucine + ATP = L-leucyl-tRNA(Leu) + AMP + diphosphate. The protein is Leucine--tRNA ligase of Mycoplasma capricolum subsp. capricolum (strain California kid / ATCC 27343 / NCTC 10154).